A 401-amino-acid chain; its full sequence is Insertion element ISM1 uncharacterized 48.3 kDa protein (401 aa).

This polypeptide is involved in transposition, and should therefore bind to nucleic acids. The protein is Insertion element ISM1 uncharacterized 48.3 kDa protein of Methanobrevibacter smithii.